Reading from the N-terminus, the 616-residue chain is Chaperone protein HscA (616 aa).

The protein belongs to the heat shock protein 70 family.

Functionally, chaperone involved in the maturation of iron-sulfur cluster-containing proteins. Has a low intrinsic ATPase activity which is markedly stimulated by HscB. Involved in the maturation of IscU. The sequence is that of Chaperone protein HscA from Edwardsiella ictaluri (strain 93-146).